Consider the following 443-residue polypeptide: Dihydroorotase (443 aa).

Zn(2+) contacts are provided by histidine 80 and histidine 82. Substrate is bound by residues 82–84 and asparagine 114; that span reads HFR. Zn(2+)-binding residues include aspartate 170, histidine 197, and histidine 251. Asparagine 297 serves as a coordination point for substrate. Aspartate 324 serves as a coordination point for Zn(2+). Aspartate 324 is an active-site residue. Substrate is bound by residues histidine 328 and 342–343; that span reads FG.

It belongs to the metallo-dependent hydrolases superfamily. DHOase family. Class I DHOase subfamily. Zn(2+) serves as cofactor.

The enzyme catalyses (S)-dihydroorotate + H2O = N-carbamoyl-L-aspartate + H(+). It participates in pyrimidine metabolism; UMP biosynthesis via de novo pathway; (S)-dihydroorotate from bicarbonate: step 3/3. Catalyzes the reversible cyclization of carbamoyl aspartate to dihydroorotate. The polypeptide is Dihydroorotase (Wolbachia sp. subsp. Brugia malayi (strain TRS)).